The primary structure comprises 346 residues: D-amino-acid oxidase (346 aa).

9 residues coordinate FAD: Gly22, Ile24, Thr52, Thr53, Ser54, Ala58, Ala59, Leu60, and Thr187. 2 residues coordinate D-proline: Tyr227 and Arg284. 2 residues coordinate D-serine: Tyr227 and Arg284. FAD contacts are provided by Arg284, Gly311, Gly312, Gly314, and Thr316. Arg284 is a D-dopa binding site. A D-proline-binding site is contributed by Gly312. Gly312 contributes to the D-serine binding site. Gly312 lines the D-dopa pocket. The short motif at Ser344–Leu346 is the Microbody targeting signal element.

The protein belongs to the DAMOX/DASOX family. FAD is required as a cofactor.

Its subcellular location is the peroxisome matrix. The catalysed reaction is a D-alpha-amino acid + O2 + H2O = a 2-oxocarboxylate + H2O2 + NH4(+). It catalyses the reaction D-serine + O2 + H2O = 3-hydroxypyruvate + H2O2 + NH4(+). The enzyme catalyses D-phenylalanine + O2 + H2O = 3-phenylpyruvate + H2O2 + NH4(+). It carries out the reaction D-alanine + O2 + H2O = pyruvate + H2O2 + NH4(+). The catalysed reaction is D-arginine + O2 + H2O = 5-guanidino-2-oxopentanoate + H2O2 + NH4(+). It catalyses the reaction D-methionine + O2 + H2O = 4-methylsulfanyl-2-oxobutanoate + H2O2 + NH4(+). The enzyme catalyses D-ornithine + O2 + H2O = 5-amino-2-oxopentanoate + H2O2 + NH4(+). It carries out the reaction D-leucine + O2 + H2O = 4-methyl-2-oxopentanoate + H2O2 + NH4(+). The catalysed reaction is D-lysine + O2 + H2O = 6-amino-2-oxohexanoate + H2O2 + NH4(+). It catalyses the reaction D-proline + O2 = 1-pyrroline-2-carboxylate + H2O2. The enzyme catalyses D-valine + O2 + H2O = 3-methyl-2-oxobutanoate + H2O2 + NH4(+). It carries out the reaction D-histidine + O2 + H2O = 3-(imidazol-5-yl)pyruvate + H2O2 + NH4(+). Its function is as follows. Catalyzes the oxidative deamination of D-amino acids with broad substrate specificity. Has low in vitro and no in vivo activity on D-serine; primary D-serine degradation is performed by the D-serine dehydratase dsd. In Dictyostelium discoideum (Social amoeba), this protein is D-amino-acid oxidase (ddo-1).